A 106-amino-acid polypeptide reads, in one-letter code: MNTTSIKIKLKSFDHRQIDAAAKKIILLARELNIETRGPVPLPTSRAIYTILRSVHINKKSREQFESRTHKRLVILKVLPTNQKLVTEKISRSQLPAGVWIEIEVS.

It belongs to the universal ribosomal protein uS10 family. In terms of assembly, part of the 30S ribosomal subunit.

Its function is as follows. Involved in the binding of tRNA to the ribosomes. The sequence is that of Small ribosomal subunit protein uS10 from Mesomycoplasma hyopneumoniae (strain 232) (Mycoplasma hyopneumoniae).